We begin with the raw amino-acid sequence, 350 residues long: Histidinol-phosphate aminotransferase 1 (350 aa).

Lysine 210 is modified (N6-(pyridoxal phosphate)lysine).

It belongs to the class-II pyridoxal-phosphate-dependent aminotransferase family. Histidinol-phosphate aminotransferase subfamily. As to quaternary structure, homodimer. Requires pyridoxal 5'-phosphate as cofactor.

It carries out the reaction L-histidinol phosphate + 2-oxoglutarate = 3-(imidazol-4-yl)-2-oxopropyl phosphate + L-glutamate. It participates in amino-acid biosynthesis; L-histidine biosynthesis; L-histidine from 5-phospho-alpha-D-ribose 1-diphosphate: step 7/9. This is Histidinol-phosphate aminotransferase 1 from Pseudomonas fluorescens (strain Pf0-1).